Reading from the N-terminus, the 232-residue chain is MKKIMSAFVGMVLLTIFCFSPQASAAYDDLHEGYATYTGSGYSGGAFLLDPIPSDMEITAINPADLNYGGVKAALAGSYLEVEGPKGKTTVYVTDLYPEGARGALDLSPNAFRKIGNMKDGKINIKWRVVKAPITGNFTYRIKEGSSRWWAAIQVRNHKYPVMKMEYEKDGKWINMEKMDYNHFVSTNLGTGSLKVRMTDIRGKVVKDTIPKLPESGTSKAYTVPGHVQFPE.

A signal peptide spans methionine 1–alanine 25. The Expansin-like EG45 domain occupies isoleucine 58 to tryptophan 127.

Its subcellular location is the secreted. It is found in the cell wall. Its function is as follows. May promote colonization of plant roots. May cause loosening and extension of plant cell walls by disrupting non-covalent bonding between cellulose microfibrils and matrix glucans. Has very low expansin activity (in vitro). No enzymatic activity has been found. Binds to peptidoglycan and to plant cell walls. This is Expansin-YoaJ (yoaJ) from Bacillus subtilis (strain 168).